The primary structure comprises 102 residues: Large ribosomal subunit protein uL24 (102 aa).

This sequence belongs to the universal ribosomal protein uL24 family. Part of the 50S ribosomal subunit.

Its function is as follows. One of two assembly initiator proteins, it binds directly to the 5'-end of the 23S rRNA, where it nucleates assembly of the 50S subunit. Functionally, one of the proteins that surrounds the polypeptide exit tunnel on the outside of the subunit. The chain is Large ribosomal subunit protein uL24 from Lysinibacillus sphaericus (strain C3-41).